The chain runs to 229 residues: Enolase-phosphatase E1 (229 aa).

This sequence belongs to the HAD-like hydrolase superfamily. MasA/MtnC family. As to quaternary structure, monomer. Mg(2+) serves as cofactor.

The catalysed reaction is 5-methylsulfanyl-2,3-dioxopentyl phosphate + H2O = 1,2-dihydroxy-5-(methylsulfanyl)pent-1-en-3-one + phosphate. It functions in the pathway amino-acid biosynthesis; L-methionine biosynthesis via salvage pathway; L-methionine from S-methyl-5-thio-alpha-D-ribose 1-phosphate: step 3/6. Its pathway is amino-acid biosynthesis; L-methionine biosynthesis via salvage pathway; L-methionine from S-methyl-5-thio-alpha-D-ribose 1-phosphate: step 4/6. In terms of biological role, bifunctional enzyme that catalyzes the enolization of 2,3-diketo-5-methylthiopentyl-1-phosphate (DK-MTP-1-P) into the intermediate 2-hydroxy-3-keto-5-methylthiopentenyl-1-phosphate (HK-MTPenyl-1-P), which is then dephosphorylated to form the acireductone 1,2-dihydroxy-3-keto-5-methylthiopentene (DHK-MTPene). The chain is Enolase-phosphatase E1 from Citrobacter koseri (strain ATCC BAA-895 / CDC 4225-83 / SGSC4696).